Here is a 307-residue protein sequence, read N- to C-terminus: Beta-lactamase (307 aa).

Residues 1–26 (MKLWFSTLKLKKAAAVLLFSCVALAG) form the signal peptide. A lipid anchor (N-palmitoyl cysteine) is attached at cysteine 27. Cysteine 27 carries S-diacylglycerol cysteine lipidation. The active-site Acyl-ester intermediate is the serine 86. The active-site Proton acceptor is the glutamate 182. 248–250 (KTG) is a substrate binding site.

It belongs to the class-A beta-lactamase family. In terms of processing, large exopenicillinase is the primary secretion product; it can be converted to small exopenicillinase.

It is found in the cell membrane. It carries out the reaction a beta-lactam + H2O = a substituted beta-amino acid. In Bacillus licheniformis, this protein is Beta-lactamase (penP).